The primary structure comprises 216 residues: uncharacterized protein (216 aa).

The helical transmembrane segment at 5–22 (LGLVFGSVILIYLISLFL) threads the bilayer.

Its subcellular location is the membrane. This is an uncharacterized protein from Aquifex aeolicus (strain VF5).